The chain runs to 216 residues: Protein InaA (216 aa).

It belongs to the protein kinase superfamily. KdkA/RfaP family.

Functionally, may be an environmental sensor responsive to several stimuli, including internal pH, proton motive force, temperature, and possibly other unknown factors. The chain is Protein InaA (inaA) from Escherichia coli (strain K12).